We begin with the raw amino-acid sequence, 314 residues long: Zinc transporter ZIP3 (314 aa).

Residues 1–3 (MVK) are Extracellular-facing. A helical membrane pass occupies residues 4–24 (LLVAKILCMVGVFFFMLLGSL). Over 25–42 (LPVKIIETDFEKAHRSKK) the chain is Cytoplasmic. Residues 43 to 63 (ILSLCNTFGGGVFLATCFNAL) form a helical membrane-spanning segment. Residues 64–85 (LPAVREKLQKVLSLGHISTDYP) lie on the Extracellular side of the membrane. The chain crosses the membrane as a helical span at residues 86 to 106 (LAETILLLGFFMTVFLEQLIL). Topologically, residues 107-169 (TFRKEKPSFI…QGLSRASPVR (63 aa)) are cytoplasmic. A phosphoserine mark is found at Ser125 and Ser129. The helical transmembrane segment at 170–190 (LLSLAFALSAHSVFEGLALGL) threads the bilayer. Residues 191–196 (QEEGEK) lie on the Extracellular side of the membrane. The chain crosses the membrane as a helical span at residues 197–217 (VVSLFVGVAVHETLVAVALGI). The Cytoplasmic segment spans residues 218-229 (SMARSAMPLRDA). Residues 230 to 250 (AKLAVTVSAMIPLGIGLGLGI) traverse the membrane as a helical segment. Over 251-262 (ESAQGVPGSVAS) the chain is Extracellular. Residues 263–283 (VLLQGLAGGTFLFITFLEILA) form a helical membrane-spanning segment. Residues 284-292 (KELEEKSDR) are Cytoplasmic-facing. Residues 293 to 313 (LLKVLFLVLGYTVLAGMVFLK) form a helical membrane-spanning segment. A topological domain (extracellular) is located at residue Trp314.

It belongs to the ZIP transporter (TC 2.A.5) family.

It localises to the cell membrane. It is found in the apical cell membrane. The catalysed reaction is Zn(2+)(in) = Zn(2+)(out). Functionally, transporter for the divalent cation Zn(2+). Mediates the influx of Zn(2+) into cells from extracellular space. Controls Zn(2+) accumulation into dentate gyrus granule cells in the hippocampus. Mediates Zn(2+) reuptake from the secreted milk within the alveolar lumen. This Homo sapiens (Human) protein is Zinc transporter ZIP3.